The chain runs to 279 residues: Replication factor A protein 2 (279 aa).

Residues 26–47 (GAGFNEYDQSSQPSVDRQQGAG) form a disordered region. The segment covering 32–46 (YDQSSQPSVDRQQGA) has biased composition (polar residues). The OB DNA-binding region spans 80–140 (VTFVGVLRNI…GNIKIFSGKI (61 aa)).

It belongs to the replication factor A protein 2 family. In terms of assembly, heterotrimer of 68, 30, and 12 kDa chains. Post-translationally, phosphorylated in a cell cycle-dependent manner. Hypophosphorylated in G1, becomes phosphorylated at the G1/S boundary, it is maintained in this state through the M phase.

The protein localises to the nucleus. Its function is as follows. Binds to single-stranded sequences. The chain is Replication factor A protein 2 (ssb2) from Schizosaccharomyces pombe (strain 972 / ATCC 24843) (Fission yeast).